The primary structure comprises 584 residues: Cytochrome c oxidase subunit 1 (584 aa).

The tract at residues 1–25 is disordered; sequence MTAVAPRVDGHVAPQRPEPTGHARK. The chain crosses the membrane as a helical span at residues 43–63; the sequence is IMYIIMSFSFFFLGGLMALLI. Position 87 (His87) interacts with Fe(II)-heme a. Helical transmembrane passes span 90 to 110, 122 to 142, 171 to 191, 214 to 234, 259 to 279, and 292 to 312; these read VMLL…VLPL, LNAF…TGFL, MWIV…INML, IFVV…AALG, LFWF…FGIV, and FGYV…MAVW. His265 and Tyr269 together coordinate Cu cation. The 1'-histidyl-3'-tyrosine (His-Tyr) cross-link spans 265–269; it reads HPEVY. The Cu cation site is built by His314 and His315. The next 2 membrane-spanning stretches (helical) occupy residues 316–336 and 360–380; these read MFVT…LISV and MIWS…GIML. His398 lines the heme a3 pocket. The next 3 membrane-spanning stretches (helical) occupy residues 399-419, 434-454, and 477-497; these read FHYT…YFWF, IHFW…HWVG, and ISTV…WNVF. A Fe(II)-heme a-binding site is contributed by His400. Residues 564 to 584 form a disordered region; the sequence is HDDINAPELGTAPALASDSSR.

As to quaternary structure, associates with subunits II, III and IV to form cytochrome c oxidase. The 4 subunit cytochrome c oxidase forms a supercomplex with the menaquinol-cytochrome c reductase complex (cytochrome bc1). The cofactor is Cu(2+). Heme serves as cofactor.

It is found in the cell membrane. The enzyme catalyses 4 Fe(II)-[cytochrome c] + O2 + 8 H(+)(in) = 4 Fe(III)-[cytochrome c] + 2 H2O + 4 H(+)(out). Its pathway is energy metabolism; oxidative phosphorylation. Functionally, cytochrome c oxidase is the component of the respiratory chain that catalyzes the reduction of oxygen to water. Subunits 1-3 form the functional core of the enzyme complex. CO I is the catalytic subunit of the enzyme. Electrons originating in cytochrome c are transferred via the copper A center of subunit 2 and heme A of subunit 1 to the bimetallic center formed by heme A3 and copper B. This chain is Cytochrome c oxidase subunit 1 (ctaD), found in Corynebacterium glutamicum (strain ATCC 13032 / DSM 20300 / JCM 1318 / BCRC 11384 / CCUG 27702 / LMG 3730 / NBRC 12168 / NCIMB 10025 / NRRL B-2784 / 534).